Here is a 542-residue protein sequence, read N- to C-terminus: Cytochrome P450 monooxygenase TRI1 (542 aa).

The helical transmembrane segment at 37 to 54 (LIYFLCFVVLGRAVQWFL) threads the bilayer. N-linked (GlcNAc...) asparagine glycans are attached at residues Asn167, Asn297, and Asn428. A heme-binding site is contributed by Cys469.

It belongs to the cytochrome P450 family. The cofactor is heme.

The protein localises to the membrane. The protein operates within sesquiterpene biosynthesis; trichothecene biosynthesis. Its function is as follows. Cytochrome P450 monooxygenase; part of 2-gene cluster involved in trichothecene C-8 modification that mediates the biosynthesis of T2-toxin. The biosynthesis of trichothecenes begins with the cyclization of farnesyl diphosphate to trichodiene and is catalyzed by the trichodiene synthase TRI5. Trichodiene undergoes a series of oxygenations catalyzed by the cytochrome P450 monooxygenase TRI4. TRI4 controls the addition of four oxygens at C-2, C-3, C-11, and the C-12, C-13-epoxide to form the intermediate isotrichotriol. Isotrichotriol then undergoes a non-enzymatic isomerization and cyclization to form isotrichodermol. During this process, the oxygen at the C-2 position becomes the pyran ring oxygen and the hydroxyl group at C-11 is lost. More complex type A trichothecenes are built by modifying isotrichodermol through a series of paired hydroxylation and acetylation or acylation steps. Isotrichodermol is converted to isotrichodermin by the acetyltransferase TRI101. TRI101 encodes a C-3 transacetylase that acts as a self-protection or resistance factor during biosynthesis and that the presence of a free C-3 hydroxyl group is a key component of Fusarium trichothecene phytotoxicity. A second hydroxyl group is added to C-15 by the trichothecene C-15 hydroxylase TRI11, producing 15-decalonectrin, which is then acetylated by TRI3, producing calonectrin. A third hydroxyl group is added at C-4 by the cytochrome P450 monooxygenase TRI13, converting calonectrin to 3,15-diacetoxyspirpenol, which is subsequently acetylated by the acetyltransferase TRI7. A fourth hydroxyl group is added to C-8 by the cytochrome P450 monooxygenase TRI1, followed by the addition of an isovaleryl moiety by TRI16. Finally, the acetyl group is removed from the C-3 position by the trichothecene C-3 esterase TRI8 to produce T-2 toxin. In Fusarium sporotrichioides, this protein is Cytochrome P450 monooxygenase TRI1.